Reading from the N-terminus, the 489-residue chain is Rhamnulokinase (489 aa).

Position 13–17 (13–17 (ASSGR)) interacts with ATP. Cys68 and Cys222 are oxidised to a cystine. Substrate contacts are provided by residues Gly83 and 236–238 (HDT). Asp237 (proton acceptor) is an active-site residue. Residue Thr259 coordinates ATP. Asn296 provides a ligand contact to substrate. ATP is bound at residue Gln304. Cys353 and Cys370 are disulfide-bonded. Gly402 is an ATP binding site. Cysteines 413 and 417 form a disulfide.

Belongs to the rhamnulokinase family. Requires Mg(2+) as cofactor.

It carries out the reaction L-rhamnulose + ATP = L-rhamnulose 1-phosphate + ADP + H(+). The protein operates within carbohydrate degradation; L-rhamnose degradation; glycerone phosphate from L-rhamnose: step 2/3. In terms of biological role, involved in the catabolism of L-rhamnose (6-deoxy-L-mannose). Catalyzes the transfer of the gamma-phosphate group from ATP to the 1-hydroxyl group of L-rhamnulose to yield L-rhamnulose 1-phosphate. This Salmonella paratyphi A (strain AKU_12601) protein is Rhamnulokinase.